We begin with the raw amino-acid sequence, 39 residues long: Cytochrome b559 subunit beta (39 aa).

The helical transmembrane segment at 14–30 (WLAVHGLAVPTVFFLGS) threads the bilayer. H18 is a binding site for heme.

The protein belongs to the PsbE/PsbF family. Heterodimer of an alpha subunit and a beta subunit. PSII is composed of 1 copy each of membrane proteins PsbA, PsbB, PsbC, PsbD, PsbE, PsbF, PsbH, PsbI, PsbJ, PsbK, PsbL, PsbM, PsbT, PsbX, PsbY, PsbZ, Psb30/Ycf12, at least 3 peripheral proteins of the oxygen-evolving complex and a large number of cofactors. It forms dimeric complexes. It depends on heme b as a cofactor.

Its subcellular location is the plastid. It is found in the chloroplast thylakoid membrane. This b-type cytochrome is tightly associated with the reaction center of photosystem II (PSII). PSII is a light-driven water:plastoquinone oxidoreductase that uses light energy to abstract electrons from H(2)O, generating O(2) and a proton gradient subsequently used for ATP formation. It consists of a core antenna complex that captures photons, and an electron transfer chain that converts photonic excitation into a charge separation. This is Cytochrome b559 subunit beta from Gnetum gnemon (Spanish joint-fir).